The chain runs to 617 residues: MLVPLAKLSCPAYQCFHALKIKKNYLPLCATRWSSTSTVPRITTHYTIYPRDKDKRWEGVNMERFAEGADVVIVGAGPAGLSAAVRLKQLAAAHEKDIRVCLVEKAAQIGAHTLSGACLDPGAFKELFPDWKEKGAPLNTPVTEDRFGILTEKYRIPVPILPGLPMNNHGNYIVRLGHLVSWMGEQAEALGVEVYPGYAAAEVLFHDDGSVKGIATNDVGIQKDGAPKATFERGLELHAKVTIFAEGCHGHLAKQLYKKFDLRANCEPQTYGIGLKELWVIDEKNWKPGRVDHTVGWPLDRHTYGGSFLYHLNEGEPLVALGLVVGLDYQNPYLSPFREFQRWKHHPSIRPTLEGGKRIAYGARALNEGGFQSIPKLTFPGGLLIGCSPGFMNVPKIKGTHTAMKSGILAAESIFNQLTSENLQSKTMGLHVTEYEDNLKNSWVWKELYSVRNIRPSCHGVLGVYGGMIYTGIFYWILRGMEPWTLKHKGSDFERLKPAKDCTPIEYPKPDGQISFDLLSSVALSGTNHEHDQPAHLTLRDDSIPVNRNLSIYDGPEQRFCPAGVYEFVPVEQGDGFRLQINAQNCVHCKTCDIKDPSQNINWVVPEGGGGPAYNGM.

A mitochondrion-targeting transit peptide spans 1-33 (MLVPLAKLSCPAYQCFHALKIKKNYLPLCATRW). 71–85 (VVIVGAGPAGLSAAV) lines the FAD pocket. N6-acetyllysine is present on Lys-96. Residues 109–130 (IGAHTLSGACLDPGAFKELFPD) lie within the membrane without spanning it. Lys-132 and Lys-223 each carry N6-acetyllysine. The a ubiquinone site is built by Gly-305 and Gly-306. Lys-357 is subject to N6-acetyllysine. Residues 428-447 (MGLHVTEYEDNLKNSWVWKE) lie within the membrane without spanning it. Ser-551 carries the post-translational modification Phosphoserine. Residues Cys-561, Cys-586, Cys-589, and Cys-592 each coordinate [4Fe-4S] cluster. The 30-residue stretch at 577-606 (FRLQINAQNCVHCKTCDIKDPSQNINWVVP) folds into the 4Fe-4S ferredoxin-type domain.

The protein belongs to the ETF-QO/FixC family. As to quaternary structure, monomer. [4Fe-4S] cluster serves as cofactor. The cofactor is FAD.

It is found in the mitochondrion inner membrane. The catalysed reaction is a ubiquinone + reduced [electron-transfer flavoprotein] = a ubiquinol + oxidized [electron-transfer flavoprotein] + H(+). Functionally, accepts electrons from ETF and reduces ubiquinone. In Pongo abelii (Sumatran orangutan), this protein is Electron transfer flavoprotein-ubiquinone oxidoreductase, mitochondrial (ETFDH).